The following is a 272-amino-acid chain: Acetylglutamate kinase (272 aa).

Substrate is bound by residues 46–47, R68, and N166; that span reads GA.

It belongs to the acetylglutamate kinase family. ArgB subfamily.

The protein localises to the cytoplasm. The enzyme catalyses N-acetyl-L-glutamate + ATP = N-acetyl-L-glutamyl 5-phosphate + ADP. Its pathway is amino-acid biosynthesis; L-arginine biosynthesis; N(2)-acetyl-L-ornithine from L-glutamate: step 2/4. Functionally, catalyzes the ATP-dependent phosphorylation of N-acetyl-L-glutamate. In Dehalococcoides mccartyi (strain CBDB1), this protein is Acetylglutamate kinase.